Reading from the N-terminus, the 331-residue chain is Bifunctional nuclease 1 (331 aa).

One can recognise a BFN domain in the interval 126–261 (CVQNNPRVLR…RIAYNNGLKV (136 aa)). The region spanning 291 to 326 (EAQEFDLVRNMLVAAVEERYKDAAQYRDQLFMFRAK) is the UVR domain.

Belongs to the bifunctional nuclease family.

The protein resides in the nucleus. Bifunctional nuclease with both RNase and DNase activities. Involved in basal defense response. Participates in abscisic acid-derived callose deposition following infection by a necrotrophic pathogen. This is Bifunctional nuclease 1 (BBD1) from Oryza sativa subsp. japonica (Rice).